The chain runs to 179 residues: Large ribosomal subunit protein uL6 (179 aa).

It belongs to the universal ribosomal protein uL6 family. In terms of assembly, part of the 50S ribosomal subunit.

Its function is as follows. This protein binds to the 23S rRNA, and is important in its secondary structure. It is located near the subunit interface in the base of the L7/L12 stalk, and near the tRNA binding site of the peptidyltransferase center. The chain is Large ribosomal subunit protein uL6 from Solidesulfovibrio magneticus (strain ATCC 700980 / DSM 13731 / RS-1) (Desulfovibrio magneticus).